Here is a 247-residue protein sequence, read N- to C-terminus: tRNA (guanine-N(7)-)-methyltransferase (247 aa).

Residues Gly-70, 93-94 (EI), 128-129 (NA), and Leu-148 contribute to the S-adenosyl-L-methionine site. Asp-151 is a catalytic residue. S-adenosyl-L-methionine is bound at residue 226 to 228 (SEE).

Belongs to the class I-like SAM-binding methyltransferase superfamily. TrmB family.

It is found in the nucleus. The enzyme catalyses guanosine(46) in tRNA + S-adenosyl-L-methionine = N(7)-methylguanosine(46) in tRNA + S-adenosyl-L-homocysteine. It participates in tRNA modification; N(7)-methylguanine-tRNA biosynthesis. Functionally, catalyzes the formation of N(7)-methylguanine at position 46 (m7G46) in tRNA. The chain is tRNA (guanine-N(7)-)-methyltransferase from Drosophila persimilis (Fruit fly).